A 973-amino-acid polypeptide reads, in one-letter code: MEDCNVHSAASILASVKEQEARFERLTRALEQERRHVALQLERAQQPGMSSGGMVGSGQPLPMAWQQLVLQEQSPGSQASLATMPEAPEVLEETVTVEEDPGTPTSHVSIVTSEDGTTRRTETKVTKTVKTVTTRTVRQVPLGPDGLPLLDGGPPLGSFADGPLDRHYVLRGGGPAATLSRAYLSSGGGFPDGPEPRDIPSYGSLSRGLGVRPPRTGLLGPGPGDGCFTLPGRREAFPMGSESGPPSGRSLPEHFQAEPYGLEDDTRSLAADDEGGPDLEPDYSTATRRRPEYGRGLRARALEDTADDTGELVEERPPFPAATAPLAQPERGSLGSLDRVVRRSPSVDSTRKEPRWRDPELPEVLAMLRHPVDPVKANAAAYLQHLCFENEGIKRRVRQLRGLPLLVALLDHPRAEVRRRACGALRNLSYGRDADNKAAIRDCGGVPALVRLLRAARDNEVRELVTGTLWNLSSYEPLKMVIIDHGLQTLTHEVIVPHSGWEREPNEDSKPRDAEWTTVFKNTSGCLRNVSSDGAEARRRLRECEGLVDALLHALQSAVGRKDTDNKSVENCVCIMRNLSYHVHKEVPGADRYQEVEPGIPGSAATSQRRRKDDASCFGGKKAKGKKDAEADRNFDTLDLPKRTEAAKGFELLYQPEVVRLYLSLLTESRNFNTLEAAAGALQNLSAGNWMWATYIRATVRKERGLPVLVELLQSETDKVVRAVAIALRNLSLDQRNKDLIGSYAMTELVRNVRNAQAPAHPSAHLEEDTVVAVLNTIHEIVSDSLDNARSLLQARGVPALVALVASSQSVREAKAASHVLQTVWSYKELRGALQRDGWTKAHFQSASTAKGPKGTPNSGGFDDSTLPLVDKNLDGEKSTTRDVIPMDTLGPDGYSTVDRRERRTLGSDSIGDSSEKELLKGPGPAVCSSDHMEVIGRGPSGTDPVLGPGAPPFCVGLAKPLVYLALPSSLLS.

Residues 95–123 (VTVEEDPGTPTSHVSIVTSEDGTTRRTET) are disordered. Thr103 and Thr105 each carry phosphothreonine. The segment covering 103–115 (TPTSHVSIVTSED) has biased composition (polar residues). Arg171 carries the post-translational modification Omega-N-methylarginine. Disordered stretches follow at residues 233–254 (RREA…LPEH) and 267–331 (RSLA…QPER). Position 268 is a phosphoserine (Ser268). Over residues 271-281 (ADDEGGPDLEP) the composition is skewed to acidic residues. Residues 289-303 (RRPEYGRGLRARALE) are compositionally biased toward basic and acidic residues. A phosphoserine mark is found at Ser333, Ser336, Ser344, and Ser346. ARM repeat units lie at residues 349-388 (STRK…HLCF), 391-430 (EGIK…NLSY), 434-468 (ADNK…VTGT), 469-509 (LWNL…NEDS), 527-566 (LRNV…DTDN), and 576-623 (MRNL…GKKA). Residues 593 to 623 (YQEVEPGIPGSAATSQRRRKDDASCFGGKKA) are disordered. A Phosphoserine modification is found at Ser607. Residues 608-624 (QRRRKDDASCFGGKKAK) carry the Nuclear localization signal motif. Phosphothreonine is present on Thr637. ARM repeat units follow at residues 641 to 681 (PKRT…AAGA), 694 to 733 (TYIR…NLSL), 734 to 776 (DQRN…AVLN), and 777 to 821 (TIHE…SHVL). The interval 771–955 (VVAVLNTIHE…VLGPGAPPFC (185 aa)) is required for interaction with RNA-binding proteins DDX5, HNRNPH2 and SRSF1 and with mRNAs. The disordered stretch occupies residues 844–926 (FQSASTAKGP…KELLKGPGPA (83 aa)). Ser865 is modified (phosphoserine). Thr866 carries the phosphothreonine modification. Over residues 872-881 (KNLDGEKSTT) the composition is skewed to basic and acidic residues.

The protein belongs to the beta-catenin family. Component of a ribonucleoprotein complex containing mRNAs and RNA-binding proteins including DDX5, HNRNPH2 and SRSF1 as well as ARVCF. Interacts (via the extreme C-terminus) with FRMPD2 (via the PDZ 2 domain). Interacts with CCDC85B. In terms of tissue distribution, expressed in optic nerve sheath envelope (at protein level). Expressed in heart (at protein level).

It is found in the cell junction. It localises to the adherens junction. Its subcellular location is the nucleus. The protein resides in the cytoplasm. In terms of biological role, contributes to the regulation of alternative splicing of pre-mRNAs. The protein is Splicing regulator ARVCF of Rattus norvegicus (Rat).